We begin with the raw amino-acid sequence, 459 residues long: Argininosuccinate lyase (459 aa).

Belongs to the lyase 1 family. Argininosuccinate lyase subfamily.

It is found in the cytoplasm. The catalysed reaction is 2-(N(omega)-L-arginino)succinate = fumarate + L-arginine. Its pathway is amino-acid biosynthesis; L-arginine biosynthesis; L-arginine from L-ornithine and carbamoyl phosphate: step 3/3. This Prochlorococcus marinus (strain MIT 9301) protein is Argininosuccinate lyase.